A 185-amino-acid chain; its full sequence is UPF0301 protein HCH_00550 (185 aa).

Belongs to the UPF0301 (AlgH) family.

The sequence is that of UPF0301 protein HCH_00550 from Hahella chejuensis (strain KCTC 2396).